A 272-amino-acid polypeptide reads, in one-letter code: Large ribosomal subunit protein uL2cz/uL2cy (272 aa).

Disordered stretches follow at residues 1 to 33 and 220 to 272; these read MAIH…SGQR and VMNP…RRSK. A2 carries the N-methylalanine modification. Over residues 7-30 the composition is skewed to polar residues; sequence KTSTSSTRNGAVQVKSNPRNNLIS.

This sequence belongs to the universal ribosomal protein uL2 family. Component of the chloroplast large ribosomal subunit (LSU). Mature 70S chloroplast ribosomes of higher plants consist of a small (30S) and a large (50S) subunit. The 30S small subunit contains 1 molecule of ribosomal RNA (16S rRNA) and 24 different proteins. The 50S large subunit contains 3 rRNA molecules (23S, 5S and 4.5S rRNA) and 33 different proteins.

Its subcellular location is the plastid. It is found in the chloroplast. In terms of biological role, component of the chloroplast ribosome (chloro-ribosome), a dedicated translation machinery responsible for the synthesis of chloroplast genome-encoded proteins, including proteins of the transcription and translation machinery and components of the photosynthetic apparatus. The chain is Large ribosomal subunit protein uL2cz/uL2cy (rpl2-A) from Spinacia oleracea (Spinach).